The primary structure comprises 314 residues: Phosphoribosylaminoimidazole-succinocarboxamide synthase (314 aa).

The protein belongs to the SAICAR synthetase family.

The catalysed reaction is 5-amino-1-(5-phospho-D-ribosyl)imidazole-4-carboxylate + L-aspartate + ATP = (2S)-2-[5-amino-1-(5-phospho-beta-D-ribosyl)imidazole-4-carboxamido]succinate + ADP + phosphate + 2 H(+). It functions in the pathway purine metabolism; IMP biosynthesis via de novo pathway; 5-amino-1-(5-phospho-D-ribosyl)imidazole-4-carboxamide from 5-amino-1-(5-phospho-D-ribosyl)imidazole-4-carboxylate: step 1/2. The protein is Phosphoribosylaminoimidazole-succinocarboxamide synthase of Bacteroides fragilis (strain ATCC 25285 / DSM 2151 / CCUG 4856 / JCM 11019 / LMG 10263 / NCTC 9343 / Onslow / VPI 2553 / EN-2).